The primary structure comprises 149 residues: Large ribosomal subunit protein bL9 (149 aa).

Belongs to the bacterial ribosomal protein bL9 family.

Its function is as follows. Binds to the 23S rRNA. This is Large ribosomal subunit protein bL9 from Helicobacter pylori (strain P12).